The chain runs to 572 residues: Oxygen-dependent choline dehydrogenase (572 aa).

Residue 9–38 coordinates FAD; sequence DYVIIGGGSAGSVLGARLSEDKDKNVLVLE. Residue His-477 is the Proton acceptor of the active site.

Belongs to the GMC oxidoreductase family. FAD is required as a cofactor.

The catalysed reaction is choline + A = betaine aldehyde + AH2. It carries out the reaction betaine aldehyde + NAD(+) + H2O = glycine betaine + NADH + 2 H(+). It functions in the pathway amine and polyamine biosynthesis; betaine biosynthesis via choline pathway; betaine aldehyde from choline (cytochrome c reductase route): step 1/1. Its function is as follows. Involved in the biosynthesis of the osmoprotectant glycine betaine. Catalyzes the oxidation of choline to betaine aldehyde and betaine aldehyde to glycine betaine at the same rate. This chain is Oxygen-dependent choline dehydrogenase, found in Staphylococcus epidermidis (strain ATCC 12228 / FDA PCI 1200).